The sequence spans 978 residues: Glycine dehydrogenase (decarboxylating) (978 aa).

An N6-(pyridoxal phosphate)lysine modification is found at lysine 726.

Belongs to the GcvP family. As to quaternary structure, the glycine cleavage system is composed of four proteins: P, T, L and H. Pyridoxal 5'-phosphate is required as a cofactor.

The enzyme catalyses N(6)-[(R)-lipoyl]-L-lysyl-[glycine-cleavage complex H protein] + glycine + H(+) = N(6)-[(R)-S(8)-aminomethyldihydrolipoyl]-L-lysyl-[glycine-cleavage complex H protein] + CO2. In terms of biological role, the glycine cleavage system catalyzes the degradation of glycine. The P protein binds the alpha-amino group of glycine through its pyridoxal phosphate cofactor; CO(2) is released and the remaining methylamine moiety is then transferred to the lipoamide cofactor of the H protein. The polypeptide is Glycine dehydrogenase (decarboxylating) (Paraburkholderia phytofirmans (strain DSM 17436 / LMG 22146 / PsJN) (Burkholderia phytofirmans)).